Consider the following 720-residue polypeptide: MIKIADFTLFFFIFVFSPSLPLAQSQLPDLDPQDKASLLIFRVSIHDLNRSLSTWYGSSCSNWTGLACQNPTGKVLSLTLSGLNLSSQIHPSLCKLSSLQSLDLSHNNFSGNIPSCFGSLRNLRTLNLSRNRFVGSIPATFVSLKELREVVLSENRDLGGVVPHWFGNFSMNLERVDFSFCSFVGELPESLLYLKSLKYLNLESNNMTGTLRDFQQPLVVLNLASNQFSGTLPCFYASRPSLSILNIAENSLVGGLPSCLGSLKELSHLNLSFNGFNYEISPRLMFSEKLVMLDLSHNGFSGRLPSRISETTEKLGLVLLDLSHNSFSGDIPLRITELKSLQALRLSHNLLTGDIPARIGNLTYLQVIDLSHNALTGSIPLNIVGCFQLLALMISNNNLSGEIQPELDALDSLKILDISNNHISGEIPLTLAGLKSLEIVDISSNNLSGNLNEAITKWSNLKYLSLARNKFSGTLPSWLFKFDKIQMIDYSSNRFSWFIPDDNLNSTRFKDFQTGGGEGFAEPPGKVEIKISAAVVAKDELSFSYNLLSMVGIDLSDNLLHGEIPEALFRQKNIEYLNLSYNFLEGQLPRLEKLPRLKALDLSHNSLSGQVIGNISAPPGLTLLNLSHNCFSGIITEKEGLGKFPGALAGNPELCVETPGSKCDPANIDASQEEIYQNELVEGPISIWIFCLSAFISFDFGVLGIFCSARARSYILQTKA.

Positions 1–25 (MIKIADFTLFFFIFVFSPSLPLAQS) are cleaved as a signal peptide. The N-cap stretch occupies residues 26-92 (QLPDLDPQDK…LNLSSQIHPS (67 aa)). Residues 26–686 (QLPDLDPQDK…QNELVEGPIS (661 aa)) lie on the Extracellular side of the membrane. N-linked (GlcNAc...) asparagine glycans are attached at residues Asn49, Asn62, Asn84, Asn108, Asn127, and Asn168. The cysteines at positions 60 and 68 are disulfide-linked. LRR repeat units follow at residues 96–122 (LSSLQSLDLSHNNFSGNIPSCFGSLRN), 124–144 (RTLNLSRNRFVGSIPATFVSL), 146–168 (ELREVVLSENRDLGGVVPHWFGN), 170–194 (SMNLERVDFSFCSFVGELPESLLYL), 195–217 (KSLKYLNLESNNMTGTLRDFQQP), 219–238 (VVLNLASNQFSGTLPCFYAS), 239–263 (RPSLSILNIAENSLVGGLPSCLGSL), 264–287 (KELSHLNLSFNGFNYEISPRLMFS), 288–311 (EKLVMLDLSHNGFSGRLPSRISET), 314–338 (KLGLVLLDLSHNSFSGDIPLRITEL), 339–362 (KSLQALRLSHNLLTGDIPARIGNL), 364–386 (YLQVIDLSHNALTGSIPLNIVGC), 388–410 (QLLALMISNNNLSGEIQPELDAL), 411–436 (DSLKILDISNNHISGEIPLTLAGLKS), 438–458 (EIVDISSNNLSGNLNEAITKW), 459–482 (SNLKYLSLARNKFSGTLPSWLFKF), 484–506 (KIQMIDYSSNRFSWFIPDDNLNS), 547–571 (LLSMVGIDLSDNLLHGEIPEALFRQ), 573–594 (NIEYLNLSYNFLEGQLPRLEKL), 595–617 (PRLKALDLSHNSLSGQVIGNISA), and 619–641 (PGLTLLNLSHNCFSGIITEKEGL). Asn206 is a glycosylation site (N-linked (GlcNAc...) asparagine). Asn270 carries N-linked (GlcNAc...) asparagine glycosylation. A glycan (N-linked (GlcNAc...) asparagine) is linked at Asn361. Asn398 is a glycosylation site (N-linked (GlcNAc...) asparagine). N-linked (GlcNAc...) asparagine glycosylation occurs at Asn446. Asn505 is a glycosylation site (N-linked (GlcNAc...) asparagine). N-linked (GlcNAc...) asparagine glycans are attached at residues Asn578, Asn614, and Asn625. Positions 649-682 (AGNPELCVETPGSKCDPANIDASQEEIYQNELVE) are C-cap/acidic domain. Residues 687–707 (IWIFCLSAFISFDFGVLGIFC) form a helical membrane-spanning segment. At 708-720 (SARARSYILQTKA) the chain is on the cytoplasmic side.

It belongs to the RLP family. As to quaternary structure, parts of a tetrameric complex made of two CLV2/CRN heterodimers that can interact with CLV3 and CLE peptides. CLV2/CRN heterodimer interacts with CLV1 homodimers. Interacts with CRN; this dimer can interact with BAM3. Interacts with CLE14. As to expression, mostly expressed in apices (e.g. shoot apical meristem and flower buds), and, to a lower extent, in flowers, leaves, seedlings and siliques. Also expressed in the inner tissues of the proximal root meristem. Expressed throughout the vascular cylinder of root tips.

It is found in the cell membrane. The protein localises to the endoplasmic reticulum membrane. Involved in the perception of CLV3 and CLV3-like (CLE) peptides, that act as extracellular signals regulating meristems maintenance. Required for the sensing of the root CLE peptides (e.g. CLE8, CLE9/CLE10, CLE11, CLE13, CLE14, CLE16, CLE17, CLE18, CLE20, CLE21, CLE25, CLE26, CLE40, CLE41/CLE44 and CLE45), which also involves CRN and leads to root growth regulation, mostly in the phloem and protophloem. Involved in controlling the stem cell population size in shoot and root apical meristems, and during organ development. Promotes the formation of CLV1 multimers. In complex with CRN, perceives secreted CLV3-like effector proteins from plant-parasitic cyst nematodes as ligand mimics of the plant CLE signaling pathway. This recognition is required for proper feeding structure (syncytium) development and ultimately successful nematode infection. CLE14 perception by CLV2/CRN complex triggers root meristem differentiation. This is Receptor-like protein CLAVATA2 from Arabidopsis thaliana (Mouse-ear cress).